The primary structure comprises 1323 residues: MEFPTQPKLVDVKTIIYPPGVKEITDKISNDEVVKRLKMVVKTFMDMDQDSEEEKQQYLPLALHLSSDFFLRNPNKDVRLLVACCLADIFRIYAPEAPYTSHDKLKEIFLFITRQLKGLEDTKSPQFNRYFYLLENLAWVKSYNICFELEDCNEIFIQLFKTLFSVINNSHNQKVQMHMLDLMSSITMEGDGVTQEQLDSILINLISAHKNLNKQAFDLAKVLLKRTAQTIEPCIANFFNQVLVLGKSSVSDLSEHVFDLIQELFAIDPHLLLSVMPQLEFKLKSNDGEERLAVVRLLAKLFGSKDSDLATQNRPLWQCFLGRFNDIHVPVRLESVKFASHCLMNHPDLAKDLTEFLKVRSHDPEEAIRHDVIVTIITAAKKDLFLVNDQLLGFVRERTLDKRWRVRKEAMMGLAQLYKKYCLHGEGGKDAAEKVSWIKDKLLHIYYQNSIDDKLLVEKIFAQQLVPHNLETEERMKCLYYLYASLDPNAVKALNEMWKCQNMLRSHVRELLDLHKQPTSEANTTAMFAKLMTVAKNLPDPGKAQDFVKKFNQVLGEDEKLRSQLEVLISPSCSCKQADVCVRDIARKVANPKQPTNPFLEMVKFLLERIAPVHIDSEAISALVKLMNKSIEGTADDEEEGVSPDSAIRAGLELLKVLSFTHPTSFHSDETYESLLQCLRMEDDKVAEAAIQIFRNTGHRIETDLPQIRSALIPILHQKAKRGTPHQAKQAVHCIHSIFSNKEVQLAQIFEPLSRSLNADVPEQLVTPLVSLGHISMLAPDQFASPMKSVVANFIVKDLLMNDRSNGDKNGKLWCPDEEVSPEVLAKGQAIKLLVRWLLGMKNNQSKSANSTLRLLSAMLVSEGDLTEQKRISKSDMSRLRLAAGAAIMKLAQEPCYHEIITPEQFQLCALVINDECYQVRQIFAQKLHKALVKLQLPLEYMAIFALCAKDPVKERRAHARQCLLKNISIRREYIKQNPVSNEKLLSLLPEYVVPYMIHLLAHDPDFTKPQDIDQLRDIKECLWFMLEVLMTKNENNSHAFMKKLCENIKQTRDAQAPDDPKANEKLFTVCDVALCVVYNKSAPCHSESSKDPVLPLTFFTQPDKDFSSKSYITDEARNLLLTGKPKPMTVLGMVNKPLNATGRRPYSRSTGSEISNNVSINSESDASVANRQSSEVPEIGVSENDENPVRLISVPPAKTETVKNKEVNLDQTAPSNTGTERGKKRSAASAGAENIRKESEEKKVDNISATPTPKPRRGRPPKSESQGSAAKNDETSKPSGRGRKRAAANQESSGAQEAANAKVPKQDSTAKKTAQRQIDLHR.

The HEAT repeat unit spans residues 385-421; it reads FLVNDQLLGFVRERTLDKRWRVRKEAMMGLAQLYKKY. The disordered stretch occupies residues 1138–1323; it reads PLNATGRRPY…TAQRQIDLHR (186 aa). A compositionally biased stretch (low complexity) spans 1153–1165; sequence SEISNNVSINSES. Composition is skewed to polar residues over residues 1166–1176 and 1210–1220; these read DASVANRQSSE and LDQTAPSNTGT. The segment covering 1235–1246 has biased composition (basic and acidic residues); the sequence is NIRKESEEKKVD.

As to quaternary structure, interacts with the cohesin complex. Binds chromatin in a cohesin-dependent manner.

It localises to the nucleus. Functionally, may regulate sister chromatid cohesion during mitosis and couple it to DNA replication. The polypeptide is Sister chromatid cohesion protein PDS5 homolog A-B (pds5a-b) (Xenopus laevis (African clawed frog)).